An 87-amino-acid polypeptide reads, in one-letter code: Exodeoxyribonuclease 7 small subunit (87 aa).

Belongs to the XseB family. As to quaternary structure, heterooligomer composed of large and small subunits.

It localises to the cytoplasm. It carries out the reaction Exonucleolytic cleavage in either 5'- to 3'- or 3'- to 5'-direction to yield nucleoside 5'-phosphates.. Functionally, bidirectionally degrades single-stranded DNA into large acid-insoluble oligonucleotides, which are then degraded further into small acid-soluble oligonucleotides. In Serratia proteamaculans (strain 568), this protein is Exodeoxyribonuclease 7 small subunit.